We begin with the raw amino-acid sequence, 2070 residues long: HEAT repeat-containing protein 5B (2070 aa).

HEAT repeat units lie at residues Glu848 to Glu885, Val1062 to Ala1099, and Leu1290 to Ser1327. Ser1737 is modified (phosphoserine).

This sequence belongs to the HEATR5 family. As to quaternary structure, self-associates. Component of the aftiphilin/p200/gamma-synergin complex, at least composed of AFTPH/aftiphilin, HEATR5B/p200a and SYNRG/gamma-synergin, which plays a role in the AP1G1/AP-1-mediated protein trafficking from early to recycling endosomes and between the trans-Golgi network (TGN) and endosomes. Within the complex interacts with AFTPH/aftiphilin and SYNRG/gamma-synergin; the interactions are direct. Interacts with GGA1.

It localises to the cytoplasm. Its subcellular location is the perinuclear region. The protein resides in the cytoplasmic vesicle. It is found in the clathrin-coated vesicle. Functionally, component of clathrin-coated vesicles. Component of the aftiphilin/p200/gamma-synergin complex, which plays roles in AP1G1/AP-1-mediated protein trafficking including the trafficking of transferrin from early to recycling endosomes, and the membrane trafficking of furin and the lysosomal enzyme cathepsin D between the trans-Golgi network (TGN) and endosomes. The protein is HEAT repeat-containing protein 5B (Heatr5b) of Mus musculus (Mouse).